We begin with the raw amino-acid sequence, 196 residues long: Molybdenum cofactor guanylyltransferase (196 aa).

GTP contacts are provided by residues Leu-10–Gly-12, Lys-23, Asn-51, Asp-69, and Asp-99. Asp-99 serves as a coordination point for Mg(2+).

Belongs to the MobA family. As to quaternary structure, monomer. Mg(2+) is required as a cofactor.

Its subcellular location is the cytoplasm. The catalysed reaction is Mo-molybdopterin + GTP + H(+) = Mo-molybdopterin guanine dinucleotide + diphosphate. Transfers a GMP moiety from GTP to Mo-molybdopterin (Mo-MPT) cofactor (Moco or molybdenum cofactor) to form Mo-molybdopterin guanine dinucleotide (Mo-MGD) cofactor. The chain is Molybdenum cofactor guanylyltransferase from Shewanella sp. (strain W3-18-1).